The primary structure comprises 179 residues: MPRINIGLTDEQRQGVINLLNQDLADSYLLLVKTKKYHWDVVGPQFRSLHQLWEEHYEKLTENIDAIAERVRTLGGYPIGSMEGFLQLATLKEHAGDVPSATGMVANLVQDHEQLIRNLRDHVDRSGDEFQDQGTADFLTGLMEEHEEIAWMLRSFIEGQPIEPNGTQPATETKTPVGV.

The segment at 160–179 is disordered; it reads QPIEPNGTQPATETKTPVGV. The span at 165 to 179 shows a compositional bias: polar residues; that stretch reads NGTQPATETKTPVGV.

It belongs to the Dps family.

This is an uncharacterized protein from Anabaena variabilis.